The chain runs to 44 residues: Tachystatin-A1 (44 aa).

3 disulfide bridges follow: cysteine 4-cysteine 24, cysteine 11-cysteine 29, and cysteine 23-cysteine 41.

As to expression, granular hemocytes, small secretory granules.

The protein localises to the secreted. Exhibits stronger antimicrobial activity against the Gram-positive bacteria (S.aureus (IC(50) is 4.2 ug/ml)) and fungi (C.albicans (IC(50) is 3.0 ug/ml) and P.pastoris (IC(50) is 0.5 ug/ml)) than Gram-negative bacteria (E.coli (IC(50) is 25 ug/ml)). Binds to chitin (8.4 uM are required to obtain 50% of binding). Does not cause hemolysis on sheep erythrocytes. Has no blocking activity on the P-type calcium channel. This chain is Tachystatin-A1, found in Tachypleus tridentatus (Japanese horseshoe crab).